Here is a 178-residue protein sequence, read N- to C-terminus: ATP synthase subunit delta (178 aa).

The protein belongs to the ATPase delta chain family. As to quaternary structure, F-type ATPases have 2 components, F(1) - the catalytic core - and F(0) - the membrane proton channel. F(1) has five subunits: alpha(3), beta(3), gamma(1), delta(1), epsilon(1). F(0) has three main subunits: a(1), b(2) and c(10-14). The alpha and beta chains form an alternating ring which encloses part of the gamma chain. F(1) is attached to F(0) by a central stalk formed by the gamma and epsilon chains, while a peripheral stalk is formed by the delta and b chains.

It is found in the cell membrane. Functionally, f(1)F(0) ATP synthase produces ATP from ADP in the presence of a proton or sodium gradient. F-type ATPases consist of two structural domains, F(1) containing the extramembraneous catalytic core and F(0) containing the membrane proton channel, linked together by a central stalk and a peripheral stalk. During catalysis, ATP synthesis in the catalytic domain of F(1) is coupled via a rotary mechanism of the central stalk subunits to proton translocation. This protein is part of the stalk that links CF(0) to CF(1). It either transmits conformational changes from CF(0) to CF(1) or is implicated in proton conduction. This is ATP synthase subunit delta from Streptococcus equi subsp. zooepidemicus (strain H70).